We begin with the raw amino-acid sequence, 914 residues long: Linoleate 13S-lipoxygenase 3-1, chloroplastic (914 aa).

Residues Met-1–Arg-83 constitute a chloroplast transit peptide. The PLAT domain maps to Leu-96–Ser-218. A Lipoxygenase domain is found at Pro-221–Ile-914. 5 residues coordinate Fe cation: His-574, His-579, His-765, Asn-769, and Ile-914.

The protein belongs to the lipoxygenase family. As to quaternary structure, monomer. Fe cation is required as a cofactor. Expressed in roots and leaves. Detected in tubers and flower buds.

The protein resides in the plastid. Its subcellular location is the chloroplast stroma. It is found in the chloroplast thylakoid. The catalysed reaction is (9Z,12Z)-octadecadienoate + O2 = (13S)-hydroperoxy-(9Z,11E)-octadecadienoate. It catalyses the reaction (9Z,12Z,15Z)-octadecatrienoate + O2 = (13S)-hydroperoxy-(9Z,11E,15Z)-octadecatrienoate. It functions in the pathway lipid metabolism; oxylipin biosynthesis. Plant lipoxygenases may be involved in a number of diverse aspects of plant physiology including growth and development, pest resistance, and senescence or responses to wounding. Required for the regulation of wound-induced gene expression, but is not involved in the bulk production of jasmonate upon wounding. Catalyzes the hydroperoxidation of lipids containing a cis,cis-1,4-pentadiene structure. Linolenic acid is the preferred substrate, before linoleic and arachidonic acids. The polypeptide is Linoleate 13S-lipoxygenase 3-1, chloroplastic (LOX3.1) (Solanum tuberosum (Potato)).